Reading from the N-terminus, the 595-residue chain is Chaperone protein HscA homolog (595 aa).

This sequence belongs to the heat shock protein 70 family.

Chaperone involved in the maturation of iron-sulfur cluster-containing proteins. Has a low intrinsic ATPase activity which is markedly stimulated by HscB. This chain is Chaperone protein HscA homolog, found in Rickettsia peacockii (strain Rustic).